Consider the following 540-residue polypeptide: (13S,14R)-13-O-acetyl-1-hydroxy-N-methylcanadine 8-hydroxylase CYP82X1 (540 aa).

A helical transmembrane segment spans residues 15–35; sequence FSIILVTTVSIVLLYSVFFWV. Cys483 lines the heme pocket.

The protein belongs to the cytochrome P450 family. It depends on heme as a cofactor. In terms of tissue distribution, highly expressed in capsules. Expressed is stems.

It is found in the membrane. The catalysed reaction is (13S,14R)-13-O-acetyl-1-hydroxy-N-methylcanadine + reduced [NADPH--hemoprotein reductase] + O2 = (13S,14R)-13-O-acetyl-1,8-dihydroxy-N-methylcanadine + oxidized [NADPH--hemoprotein reductase] + H2O + H(+). It functions in the pathway alkaloid biosynthesis. Cytochrome P450 involved in the biosynthesis of the benzylisoquinoline alkaloid noscapine. Converts (13S,14R)-13-O-acetyl-1-hydroxy-N-methylcanadine to (13S,14R)-13-O-acetyl-1,8-dihydroxy-N-methylcanadine. The sequence is that of (13S,14R)-13-O-acetyl-1-hydroxy-N-methylcanadine 8-hydroxylase CYP82X1 from Papaver somniferum (Opium poppy).